The sequence spans 460 residues: V-type ATP synthase beta chain (460 aa).

The protein belongs to the ATPase alpha/beta chains family.

In terms of biological role, produces ATP from ADP in the presence of a proton gradient across the membrane. The V-type beta chain is a regulatory subunit. This is V-type ATP synthase beta chain from Clostridium perfringens (strain ATCC 13124 / DSM 756 / JCM 1290 / NCIMB 6125 / NCTC 8237 / Type A).